Consider the following 156-residue polypeptide: UPF0460 protein in nifX 3'region (156 aa).

This sequence belongs to the UPF0460 family.

This is UPF0460 protein in nifX 3'region from Rhodobacter capsulatus (Rhodopseudomonas capsulata).